The sequence spans 480 residues: Ochratoxinase (480 aa).

The Zn(2+) site is built by histidine 111, histidine 113, lysine 246, histidine 287, and histidine 307. Residue lysine 246 is part of the active site. Residue aspartate 378 is part of the active site.

This sequence belongs to the metallo-dependent hydrolases superfamily. Ochratoxinase amidase 2 family. Homooctamer. Zn(2+) is required as a cofactor.

It is found in the secreted. It carries out the reaction ochratoxin A + H2O = ochratoxin alpha + L-phenylalanine. The Zn(2+)-specific chelator 1,10-phenanthroline inhibits the enzyme activity. Its function is as follows. Carboxypeptidase that catalyzes the release of a C-terminal amino acid with specific catalytic activity for aromatic amino acids such as phenylalanine. Is able to degrade ochratoxin A, one of the five major mycotoxins most harmful to humans and animals that is produced by Aspergillus and Penicillium species and occurs in a wide range of agricultural products. The protein is Ochratoxinase of Aspergillus niger (strain ATCC MYA-4892 / CBS 513.88 / FGSC A1513).